The primary structure comprises 117 residues: G antigen 12B/C/D/E (117 aa).

The interval 1-117 (MSWRGRSTYY…PEEGEKQSQC (117 aa)) is disordered. Acidic residues-rich tracts occupy residues 32–45 (FSDE…EEGE) and 87–96 (ECEDGPDGQE). The segment covering 103 to 117 (EEVKTPEEGEKQSQC) has biased composition (basic and acidic residues).

Belongs to the GAGE family.

This chain is G antigen 12B/C/D/E (GAGE12B), found in Homo sapiens (Human).